A 723-amino-acid polypeptide reads, in one-letter code: Fatty acid oxidation complex subunit alpha (723 aa).

The interval 1-189 (MIYQAKTLQV…KVGLLDAIVD (189 aa)) is enoyl-CoA hydratase/isomerase. Residue aspartate 296 participates in substrate binding. Residues 311–723 (SQDTQHAAVL…FYSAQQVSAL (413 aa)) form a 3-hydroxyacyl-CoA dehydrogenase region. NAD(+) contacts are provided by residues methionine 325, aspartate 344, 401–403 (VVE), lysine 408, and serine 430. Histidine 451 serves as the catalytic For 3-hydroxyacyl-CoA dehydrogenase activity. Residue asparagine 454 coordinates NAD(+). Residues asparagine 501 and tyrosine 661 each coordinate substrate.

It in the N-terminal section; belongs to the enoyl-CoA hydratase/isomerase family. This sequence in the C-terminal section; belongs to the 3-hydroxyacyl-CoA dehydrogenase family. As to quaternary structure, heterotetramer of two alpha chains (FadB) and two beta chains (FadA).

The catalysed reaction is a (3S)-3-hydroxyacyl-CoA + NAD(+) = a 3-oxoacyl-CoA + NADH + H(+). It carries out the reaction a (3S)-3-hydroxyacyl-CoA = a (2E)-enoyl-CoA + H2O. The enzyme catalyses a 4-saturated-(3S)-3-hydroxyacyl-CoA = a (3E)-enoyl-CoA + H2O. It catalyses the reaction (3S)-3-hydroxybutanoyl-CoA = (3R)-3-hydroxybutanoyl-CoA. The catalysed reaction is a (3Z)-enoyl-CoA = a 4-saturated (2E)-enoyl-CoA. It carries out the reaction a (3E)-enoyl-CoA = a 4-saturated (2E)-enoyl-CoA. The protein operates within lipid metabolism; fatty acid beta-oxidation. Involved in the aerobic and anaerobic degradation of long-chain fatty acids via beta-oxidation cycle. Catalyzes the formation of 3-oxoacyl-CoA from enoyl-CoA via L-3-hydroxyacyl-CoA. It can also use D-3-hydroxyacyl-CoA and cis-3-enoyl-CoA as substrate. This Vibrio cholerae serotype O1 (strain ATCC 39315 / El Tor Inaba N16961) protein is Fatty acid oxidation complex subunit alpha.